The following is a 589-amino-acid chain: Cyclohexane-1,2-dione hydrolase (589 aa).

E52 is a thiamine diphosphate binding site. The segment at 400–480 is thiamine pyrophosphate binding; sequence NHTLPMFGGA…VITMVFTNES (81 aa). The Mg(2+) site is built by D451 and N478.

The protein belongs to the TPP enzyme family. In terms of assembly, homodimer. Mg(2+) is required as a cofactor. Requires thiamine diphosphate as cofactor. FAD serves as cofactor.

It catalyses the reaction cyclohexan-1,2-dione + H2O = 6-oxohexanoate + H(+). Its function is as follows. Catalyzes the ring-opening cleavage of the alicyclic alcohol cyclohexane-1,2-dione. The chain is Cyclohexane-1,2-dione hydrolase from Azoarcus sp.